We begin with the raw amino-acid sequence, 194 residues long: Imidazoleglycerol-phosphate dehydratase (194 aa).

Belongs to the imidazoleglycerol-phosphate dehydratase family.

It localises to the cytoplasm. It catalyses the reaction D-erythro-1-(imidazol-4-yl)glycerol 3-phosphate = 3-(imidazol-4-yl)-2-oxopropyl phosphate + H2O. It participates in amino-acid biosynthesis; L-histidine biosynthesis; L-histidine from 5-phospho-alpha-D-ribose 1-diphosphate: step 6/9. The polypeptide is Imidazoleglycerol-phosphate dehydratase (Bacillus licheniformis (strain ATCC 14580 / DSM 13 / JCM 2505 / CCUG 7422 / NBRC 12200 / NCIMB 9375 / NCTC 10341 / NRRL NRS-1264 / Gibson 46)).